The chain runs to 238 residues: Probable transcriptional regulatory protein TC_0742 (238 aa).

The disordered stretch occupies residues 1–21 (MAGHSKWANTKHRKERADHKK). The segment covering 9–21 (NTKHRKERADHKK) has biased composition (basic residues).

It belongs to the TACO1 family.

The protein localises to the cytoplasm. This chain is Probable transcriptional regulatory protein TC_0742, found in Chlamydia muridarum (strain MoPn / Nigg).